The chain runs to 940 residues: Translation initiation factor IF-2 (940 aa).

2 disordered regions span residues 48–264 (ESFG…VESK) and 278–351 (QVAE…TERK). Composition is skewed to basic and acidic residues over residues 65-95 (SKPE…KEEV), 112-125 (FKAE…EQAA), 155-206 (NNER…REAA), 232-258 (RTSE…KFEE), and 292-301 (ARPDKKRDFN). Low complexity predominate over residues 314–332 (NRNSQNQVRNQRTSNWNNN). Residues 442-609 (ERPPVVTIMG…TVLLVAEIQE (168 aa)) enclose the tr-type G domain. The G1 stretch occupies residues 451–458 (GHVDHGKT). 451–458 (GHVDHGKT) lines the GTP pocket. Positions 476 to 480 (GITQH) are G2. Residues 497-500 (DTPG) form a G3 region. GTP contacts are provided by residues 497–501 (DTPGH) and 551–554 (NKID). Residues 551 to 554 (NKID) are G4. The interval 587–589 (SAK) is G5.

Belongs to the TRAFAC class translation factor GTPase superfamily. Classic translation factor GTPase family. IF-2 subfamily.

Its subcellular location is the cytoplasm. In terms of biological role, one of the essential components for the initiation of protein synthesis. Protects formylmethionyl-tRNA from spontaneous hydrolysis and promotes its binding to the 30S ribosomal subunits. Also involved in the hydrolysis of GTP during the formation of the 70S ribosomal complex. This Streptococcus suis (strain 98HAH33) protein is Translation initiation factor IF-2.